The primary structure comprises 675 residues: Zinc finger CCCH domain-containing protein 65 (675 aa).

Residues 294 to 320 (TFSNEAKMDPGTSIKKRSAPSKDAKAR) are disordered. Residues 307 to 320 (IKKRSAPSKDAKAR) show a composition bias toward basic residues. Residues 314–342 (SKDAKARKRAKARIKRAQERIALGVKKLK) are a coiled coil. 3 consecutive C3H1-type zinc fingers follow at residues 350-377 (PKPI…HDTI), 384-406 (PCCY…HDLS), and 409-432 (PCNN…HKGT). Disordered stretches follow at residues 487–572 (LKPS…LPLG) and 586–612 (EQKT…SHIQ). The span at 490–504 (SSHSNQRNSSDASSS) shows a compositional bias: low complexity. The span at 543–567 (KASSASKPNTDNSDSQTLKQSQQGS) shows a compositional bias: polar residues. Basic and acidic residues predominate over residues 586-595 (EQKTLNREPQ). Over residues 597 to 612 (PASSKNLKTTPSSHIQ) the composition is skewed to polar residues.

Functionally, possesses RNA-binding and ribonuclease activities in vitro. This Arabidopsis thaliana (Mouse-ear cress) protein is Zinc finger CCCH domain-containing protein 65 (EMB1789).